The following is a 155-amino-acid chain: Ribosome maturation factor RimP (155 aa).

The protein belongs to the RimP family.

Its subcellular location is the cytoplasm. Its function is as follows. Required for maturation of 30S ribosomal subunits. This chain is Ribosome maturation factor RimP, found in Synechococcus sp. (strain CC9605).